Here is a 636-residue protein sequence, read N- to C-terminus: Threonine--tRNA ligase (636 aa).

Residues 1–61 (MPVITLPDGS…TQDVSLSIIT (61 aa)) enclose the TGS domain. A catalytic region spans residues 242–533 (DHRKLGKKFD…LIEEYEGAFP (292 aa)). Residues Cys-333, His-384, and His-510 each contribute to the Zn(2+) site.

Belongs to the class-II aminoacyl-tRNA synthetase family. Homodimer. The cofactor is Zn(2+).

The protein resides in the cytoplasm. It catalyses the reaction tRNA(Thr) + L-threonine + ATP = L-threonyl-tRNA(Thr) + AMP + diphosphate + H(+). Catalyzes the attachment of threonine to tRNA(Thr) in a two-step reaction: L-threonine is first activated by ATP to form Thr-AMP and then transferred to the acceptor end of tRNA(Thr). Also edits incorrectly charged L-seryl-tRNA(Thr). This chain is Threonine--tRNA ligase, found in Saccharophagus degradans (strain 2-40 / ATCC 43961 / DSM 17024).